The sequence spans 212 residues: SOSS complex subunit B1 (212 aa).

Positions 22–92 form a DNA-binding region, OB; it reads IVLETGRVTK…TLYTGRGGDL (71 aa). Positions 110–212 are disordered; sequence EPNPEYNTQQ…GKETRRSSKR (103 aa). Residues 114-130 are compositionally biased toward polar residues; the sequence is EYNTQQAPNKSVQNNDN. At threonine 117 the chain carries Phosphothreonine; by ATM. Over residues 131-148 the composition is skewed to low complexity; sequence SPTAPQATTGPPAASPAS. Over residues 149–160 the composition is skewed to polar residues; sequence ENQNGNGLSTQL. A compositionally biased stretch (low complexity) spans 166-178; it reads PHPSHTPSHPPST.

It belongs to the SOSS-B family. SOSS-B1 subfamily. As to quaternary structure, component of the SOSS complex, composed of SOSS-B (SOSS-B1/NABP2 or SOSS-B2/NABP1), SOSS-A/INTS3 and SOSS-C/INIP. SOSS complexes containing SOSS-B1/NABP2 are more abundant than complexes containing SOSS-B2/NABP1. Directly interacts with ATM, SOSS-A/INTS3 and RAD51. Interacts with INTS7. Post-translationally, phosphorylated by ATM in response to DNA damage. Phosphorylation prevents degradation by the proteasome, hence stabilization of the protein and accumulation within cells. In terms of processing, ubiquitinated in a FBXL5-dependent manner, leading to proteasomal degradation.

It localises to the nucleus. Component of the SOSS complex, a multiprotein complex that functions downstream of the MRN complex to promote DNA repair and G2/M checkpoint. In the SOSS complex, acts as a sensor of single-stranded DNA that binds to single-stranded DNA, in particular to polypyrimidines. The SOSS complex associates with DNA lesions and influences diverse endpoints in the cellular DNA damage response including cell-cycle checkpoint activation, recombinational repair and maintenance of genomic stability. Required for efficient homologous recombination-dependent repair of double-strand breaks (DSBs) and ATM-dependent signaling pathways. The protein is SOSS complex subunit B1 (Nabp2) of Mus musculus (Mouse).